Reading from the N-terminus, the 630-residue chain is Putative lipase atg15 (630 aa).

The Cytoplasmic portion of the chain corresponds to 1–20 (MKSSQRRIKRHAMRDMSIST). The helical; Signal-anchor for type II membrane protein transmembrane segment at 21 to 40 (LLLSVVLLPSVVSANDHVYF) threads the bilayer. Over 41 to 630 (NPPSPGSPFL…WGSDIEHYEI (590 aa)) the chain is Lumenal. N-linked (GlcNAc...) asparagine glycosylation is found at asparagine 200, asparagine 222, asparagine 280, and asparagine 304. Serine 320 (charge relay system) is an active-site residue. An N-linked (GlcNAc...) asparagine glycan is attached at asparagine 466. Residues 577 to 589 (SVTAPPFSTSTSS) are compositionally biased toward polar residues. Residues 577–599 (SVTAPPFSTSTSSDHVRADHSIG) form a disordered region.

The protein belongs to the AB hydrolase superfamily. Lipase family. Binds to both phosphatidylinositol (PI) and phosphatidylinositol 3,5-bisphosphate (PIP2).

It localises to the endosome. It is found in the multivesicular body membrane. The protein resides in the prevacuolar compartment membrane. The catalysed reaction is a triacylglycerol + H2O = a diacylglycerol + a fatty acid + H(+). Lipase which is essential for lysis of subvacuolar cytoplasm to vacuole targeted bodies and intravacuolar autophagic bodies. Involved in the lysis of intravacuolar multivesicular body (MVB) vesicles. The intravacuolar membrane disintegration by atg15 is critical to life span extension. The sequence is that of Putative lipase atg15 (atg15) from Aspergillus clavatus (strain ATCC 1007 / CBS 513.65 / DSM 816 / NCTC 3887 / NRRL 1 / QM 1276 / 107).